The primary structure comprises 74 residues: MDLSVKSEENVEYMVEAIKEKLRMVNAGAMRAASFNEEMYEDLRDIYEHVMKRETFSISEMQAITEELGTLIKK.

This sequence belongs to the UPF0435 family.

The chain is UPF0435 protein BAA_0470 from Bacillus anthracis (strain A0248).